Reading from the N-terminus, the 374-residue chain is Chaperone protein DnaJ (374 aa).

In terms of domain architecture, J spans 5–70 (DYYEVLGVER…SKRAAFDQYG (66 aa)). The CR-type zinc finger occupies 133 to 211 (GTTVSIRVPT…CHGEGRVEEY (79 aa)). The Zn(2+) site is built by Cys146, Cys149, Cys163, Cys166, Cys185, Cys188, Cys199, and Cys202. CXXCXGXG motif repeat units follow at residues 146–153 (CQPCDGSG), 163–170 (CPTCGGIG), 185–192 (CPRCHGQG), and 199–206 (CTSCHGEG).

It belongs to the DnaJ family. Homodimer. Zn(2+) is required as a cofactor.

The protein localises to the cytoplasm. In terms of biological role, participates actively in the response to hyperosmotic and heat shock by preventing the aggregation of stress-denatured proteins and by disaggregating proteins, also in an autonomous, DnaK-independent fashion. Unfolded proteins bind initially to DnaJ; upon interaction with the DnaJ-bound protein, DnaK hydrolyzes its bound ATP, resulting in the formation of a stable complex. GrpE releases ADP from DnaK; ATP binding to DnaK triggers the release of the substrate protein, thus completing the reaction cycle. Several rounds of ATP-dependent interactions between DnaJ, DnaK and GrpE are required for fully efficient folding. Also involved, together with DnaK and GrpE, in the DNA replication of plasmids through activation of initiation proteins. This Pseudomonas putida (strain ATCC 700007 / DSM 6899 / JCM 31910 / BCRC 17059 / LMG 24140 / F1) protein is Chaperone protein DnaJ.